The sequence spans 976 residues: Leucine--tRNA ligase (976 aa).

A 'HIGH' region motif is present at residues 63-74 (PYPSGVGLHVGH). The short motif at 745–749 (KMGKS) is the 'KMSKS' region element. Lys-748 is an ATP binding site.

It belongs to the class-I aminoacyl-tRNA synthetase family.

It localises to the cytoplasm. The catalysed reaction is tRNA(Leu) + L-leucine + ATP = L-leucyl-tRNA(Leu) + AMP + diphosphate. This Corynebacterium jeikeium (strain K411) protein is Leucine--tRNA ligase.